The following is a 266-amino-acid chain: Glucosamine-6-phosphate deaminase (266 aa).

D72 functions as the Proton acceptor; for enolization step in the catalytic mechanism. Catalysis depends on D141, which acts as the For ring-opening step. The active-site Proton acceptor; for ring-opening step is H143. The active-site For ring-opening step is E148.

The protein belongs to the glucosamine/galactosamine-6-phosphate isomerase family. NagB subfamily. In terms of assembly, homohexamer.

It catalyses the reaction alpha-D-glucosamine 6-phosphate + H2O = beta-D-fructose 6-phosphate + NH4(+). The protein operates within amino-sugar metabolism; N-acetylneuraminate degradation; D-fructose 6-phosphate from N-acetylneuraminate: step 5/5. Allosterically activated by N-acetylglucosamine 6-phosphate (GlcNAc6P). Catalyzes the reversible isomerization-deamination of glucosamine 6-phosphate (GlcN6P) to form fructose 6-phosphate (Fru6P) and ammonium ion. This is Glucosamine-6-phosphate deaminase from Klebsiella pneumoniae (strain 342).